A 102-amino-acid chain; its full sequence is RNA-binding protein Hfq (102 aa).

Residues 9–68 enclose the Sm domain; sequence DPFLNALRRERVPVSIYLVNGIKLQGQIESFDQFVILLKNTVSQMVYKHAISTVVPSRPV. The interval 63-102 is disordered; the sequence is VPSRPVSHHSNNAGGGTSSNYHHGSSAQGTSAQQDSEETE. The span at 70–96 shows a compositional bias: polar residues; the sequence is HHSNNAGGGTSSNYHHGSSAQGTSAQQ.

It belongs to the Hfq family. As to quaternary structure, homohexamer.

Functionally, RNA chaperone that binds small regulatory RNA (sRNAs) and mRNAs to facilitate mRNA translational regulation in response to envelope stress, environmental stress and changes in metabolite concentrations. Also binds with high specificity to tRNAs. The sequence is that of RNA-binding protein Hfq from Citrobacter koseri (strain ATCC BAA-895 / CDC 4225-83 / SGSC4696).